The sequence spans 465 residues: UDP-N-acetylmuramate--L-alanine ligase (465 aa).

114 to 120 is an ATP binding site; the sequence is GTHGKTT.

This sequence belongs to the MurCDEF family.

The protein resides in the cytoplasm. The catalysed reaction is UDP-N-acetyl-alpha-D-muramate + L-alanine + ATP = UDP-N-acetyl-alpha-D-muramoyl-L-alanine + ADP + phosphate + H(+). It functions in the pathway cell wall biogenesis; peptidoglycan biosynthesis. Cell wall formation. The chain is UDP-N-acetylmuramate--L-alanine ligase from Chlorobium phaeobacteroides (strain BS1).